The following is a 236-amino-acid chain: 2-C-methyl-D-erythritol 4-phosphate cytidylyltransferase (236 aa).

Belongs to the IspD/TarI cytidylyltransferase family. IspD subfamily. As to quaternary structure, homodimer.

The catalysed reaction is 2-C-methyl-D-erythritol 4-phosphate + CTP + H(+) = 4-CDP-2-C-methyl-D-erythritol + diphosphate. Its pathway is isoprenoid biosynthesis; isopentenyl diphosphate biosynthesis via DXP pathway; isopentenyl diphosphate from 1-deoxy-D-xylulose 5-phosphate: step 2/6. In terms of biological role, catalyzes the formation of 4-diphosphocytidyl-2-C-methyl-D-erythritol from CTP and 2-C-methyl-D-erythritol 4-phosphate (MEP). The chain is 2-C-methyl-D-erythritol 4-phosphate cytidylyltransferase from Escherichia coli O127:H6 (strain E2348/69 / EPEC).